A 279-amino-acid chain; its full sequence is NADPH-dependent 7-cyano-7-deazaguanine reductase (279 aa).

A substrate-binding site is contributed by 86–88 (VES). 88–89 (SK) is an NADPH binding site. Cysteine 187 (thioimide intermediate) is an active-site residue. Residue aspartate 194 is the Proton donor of the active site. 226 to 227 (HE) is a substrate binding site. 255–256 (RG) serves as a coordination point for NADPH.

It belongs to the GTP cyclohydrolase I family. QueF type 2 subfamily. As to quaternary structure, homodimer.

The protein resides in the cytoplasm. It catalyses the reaction 7-aminomethyl-7-carbaguanine + 2 NADP(+) = 7-cyano-7-deazaguanine + 2 NADPH + 3 H(+). Its pathway is tRNA modification; tRNA-queuosine biosynthesis. Catalyzes the NADPH-dependent reduction of 7-cyano-7-deazaguanine (preQ0) to 7-aminomethyl-7-deazaguanine (preQ1). This is NADPH-dependent 7-cyano-7-deazaguanine reductase from Actinobacillus succinogenes (strain ATCC 55618 / DSM 22257 / CCUG 43843 / 130Z).